Reading from the N-terminus, the 904-residue chain is Polycystin-2 (904 aa).

The disordered stretch occupies residues 1–102; the sequence is MSSSRVRPQA…SSSGGVPGNF (102 aa). Residues 1–155 are Cytoplasmic-facing; the sequence is MSSSRVRPQA…NSNREMYLKT (155 aa). A compositionally biased stretch (low complexity) spans 8 to 20; sequence PQAPQSPAASASA. The span at 26–38 shows a compositional bias: basic and acidic residues; that stretch reads EGIEMEKMHHEEV. Residues 86 to 96 show a composition bias toward low complexity; sequence SVSTTSSSSSG. A helical transmembrane segment spans residues 156–177; it reads VLREMITYILFLLTLCIITYGM. Residues 178–404 are Extracellular-facing; that stretch reads VSTNMYYYTK…TVRLLRYVSS (227 aa). N-linked (GlcNAc...) asparagine glycosylation is found at N235, N241, and N264. An intrachain disulfide couples C267 to C280. N298 is a glycosylation site (N-linked (GlcNAc...) asparagine). A helical membrane pass occupies residues 405–425; the sequence is WDYFVGMCEVSFCLFVLYYLV. The Cytoplasmic portion of the chain corresponds to 426–441; it reads EEALEIRLHRLRYFKS. A helical membrane pass occupies residues 442-462; it reads LWNCLDVLIVALSVPAIIMNI. Residues 463–489 are Extracellular-facing; that stretch reads CRTSAVSHRLHFLLENHSTYPNFEPLA. Residue N478 is glycosylated (N-linked (GlcNAc...) asparagine). A helical transmembrane segment spans residues 490–510; the sequence is RLQVHFNNLAAIIVFLSWVKL. The Cytoplasmic segment spans residues 511–534; that stretch reads FKFINFNKTMNQLSTTMSRCAKDL. Residues 535–556 form a helical membrane-spanning segment; sequence MGFAIMFFIVFLAYAQLAYLVF. Topologically, residues 557-568 are extracellular; sequence GTQVNDFSTFQA. Residues 569-583 constitute an intramembrane region (pore-forming); it reads CIFTQFRIILGDFDF. L578 contributes to the Ca(2+) binding site. The Selectivity filter signature appears at 578–580; that stretch reads LGD. Over 584 to 591 the chain is Extracellular; that stretch reads SEIEEADS. Residues 592-612 form a helical membrane-spanning segment; it reads VLGPIYFTTFVFFIFMILLNM. Residues 613 to 904 lie on the Cytoplasmic side of the membrane; that stretch reads FLAIINDTYS…DAAASGPAHL (292 aa). The EF-hand 1 domain occupies 687–722; that stretch reads HSDAEIEAIFAKYDLDGDQELTEHEHQQMRDDLEKE. Ca(2+) contacts are provided by D700, D702, D704, E706, and E711. Basic and acidic residues predominate over residues 708 to 732; the sequence is TEHEHQQMRDDLEKEREDLDLEHSS. Disordered regions lie at residues 708-770 and 854-904; these read TEHE…SSGG and ESDD…PAHL. Residues 740-759 are linker; that stretch reads RSFSRSQDDSEEDDDEDSGH. Positions 768-786 constitute an EF-hand 2 domain; it reads SGGVSYEEFQVLVRRVDRM. The stretch at 770-809 forms a coiled coil; that stretch reads GVSYEEFQVLVRRVDRMEHSIGSIVSKIDAVIVKLEAMER. Residues 878–890 are compositionally biased toward low complexity; sequence LRPRSSRPPSSLS.

It belongs to the polycystin family. As to quaternary structure, homotetramer. Component of the heterotetrameric polycystin channel complex with pkd1; the tetramer contains one pkd1 chain and three pkd2 chains. Interacts with pkd1l1. In terms of processing, phosphorylated. Phosphorylation is important for protein function; a mutant human construct that lacks the N-terminal phosphorylation sites cannot complement a zebrafish pkd2-deficient mutant. N-glycosylated. The four subunits in a tetramer probably differ in the extent of glycosylation; simultaneous glycosylation of all experimentally validated sites would probably create steric hindrance. Post-translationally, sumoylated by SUMO1; sumoylation regulates PKD2 membrane recycling. As to expression, detected along cilia and at the cilium basal body in Kupffer's vesicle at the 10 somite stage. Detected in heart at 48hpf. Detected in muscle and pronephric kidney at 48 hpf. Detected on trunk muscle sarcolemma and sarcomere, on ependymal cell cilia in brain, at the apical cell membrane in epithelial cells in the ear, at the lateral line organ and olfactory placode at 56 hpf. Detected in adult kidney (at protein level).

The protein localises to the basolateral cell membrane. It localises to the cell membrane. Its subcellular location is the sarcolemma. The protein resides in the cytoplasm. It is found in the myofibril. The protein localises to the sarcomere. It localises to the sarcoplasmic reticulum membrane. Its subcellular location is the apical cell membrane. The protein resides in the endoplasmic reticulum membrane. It is found in the cell projection. The protein localises to the cilium. It localises to the cytoskeleton. Its subcellular location is the cilium basal body. The protein resides in the cytoplasmic vesicle membrane. The enzyme catalyses K(+)(in) = K(+)(out). It carries out the reaction Na(+)(in) = Na(+)(out). It catalyses the reaction Ca(2+)(in) = Ca(2+)(out). With respect to regulation, channel activity is regulated by phosphorylation. Channel activity is regulated by intracellular Ca(2+). Forms a nonselective cation channel. Can function as a homotetrameric ion channel or can form heteromer with PKD1. Displays distinct function depending on its subcellular localization and regulation by its binding partners. In the primary cilium functions as a cation channel, with a preference for monovalent cations over divalent cations that allows K(+), Na(+) and Ca(2+) influx, with low selectivity for Ca(2+). In the endoplasmic reticulum, likely functions as a K(+) channel to facilitate Ca(2+) release. Required for normal oscillation of Ca(2+) levels within cilia; these oscillations of the intraciliary Ca(2+) levels can trigger cytoplasmic Ca(2+) signaling cascades. Required for normal temporal variation of the intracellular Ca(2+) levels in the heart. Plays a role in fluid-flow mechanosensation. Required for normal specification of the body left-right axis during embryogenesis, most likely via its role in ciliary Ca(2+) oscillations in Kupffer's vesicle. In Danio rerio (Zebrafish), this protein is Polycystin-2.